Here is a 252-residue protein sequence, read N- to C-terminus: Transcriptional regulatory protein HptR (252 aa).

The region spanning 3-118 (KVVICDDERI…QLEVILGRLV (116 aa)) is the Response regulatory domain. Residue Asp55 is modified to 4-aspartylphosphate. Residues 153 to 250 (NQIVDQIKQS…QMAPSDYCKQ (98 aa)) enclose the HTH araC/xylS-type domain. DNA-binding regions (H-T-H motif) lie at residues 170–191 (SDLI…KDHV) and 217–240 (HYEI…KKYL).

Phosphorylated by HptS.

Its subcellular location is the cytoplasm. Member of the two-component regulatory system HptS/HptR that regulates genes involved in hexose phosphate transport system in response to changes in extracellular phosphate sources. Activates uhpT expression to facilitate glucose-6-phosphate/G6P utilization by directly binding to its promoter. Antagonizes CcpA-dependent transcription of a subset of CcpA-regulated genes involved in antibiotic susceptibility. In Staphylococcus aureus (strain bovine RF122 / ET3-1), this protein is Transcriptional regulatory protein HptR (hptR).